Here is a 435-residue protein sequence, read N- to C-terminus: Glutamine synthetase (435 aa).

The 83-residue stretch at 12 to 94 (KGVKYFMISY…VAADCIMDDA (83 aa)) folds into the GS beta-grasp domain. Residues 100 to 435 (PRVVLKKLVA…EWEHQTTLDV (336 aa)) form the GS catalytic domain. Residues Glu123, Glu125, Glu180, and Glu187 each coordinate Mg(2+). Position 232 (Gly232) interacts with L-glutamate. His236 is a Mg(2+) binding site. Ser240 lines the ATP pocket. L-glutamate-binding residues include Arg291 and Arg315. ATP is bound by residues Arg315 and Arg320. Glu328 is a Mg(2+) binding site. Residue Arg330 coordinates L-glutamate.

The protein belongs to the glutamine synthetase family. Homooctamer. The cofactor is Mg(2+).

It carries out the reaction L-glutamate + NH4(+) + ATP = L-glutamine + ADP + phosphate + H(+). Inhibited by methionine sulfoximine, ADP and pyrophosphate, but not by various nitrogen-containing metabolites that inhibit other GS enzymes. Its function is as follows. Catalyzes the ATP-dependent biosynthesis of glutamine from glutamate and ammonia. This Rhizobium meliloti (strain 1021) (Ensifer meliloti) protein is Glutamine synthetase.